A 155-amino-acid polypeptide reads, in one-letter code: Cytochrome P450 (155 aa).

Residue cysteine 99 participates in heme binding.

It belongs to the cytochrome P450 family. Heme serves as cofactor.

The sequence is that of Cytochrome P450 from Helianthus annuus (Common sunflower).